The sequence spans 164 residues: MSQSICSTGLRWLWLVVVVLIIDLGSKYLILQNFALGDTVPLFPSLNLHYARNYGAAFSFLADSGGWQRWFFAGIAIGISVILVVMMYRSKATQKLNNIAYALIIGGALGNLFDRLWHGFVVDMIDFYVGDWHFATFNLADTAICVGAALIVLEGFLPSKAKKQ.

3 helical membrane passes run 12–32, 70–90, and 102–122; these read WLWLVVVVLIIDLGSKYLILQ, WFFAGIAIGISVILVVMMYRS, and ALIIGGALGNLFDRLWHGFVV. Residues Asp-123 and Asp-141 contribute to the active site. A helical membrane pass occupies residues 137–157; it reads FNLADTAICVGAALIVLEGFL.

Belongs to the peptidase A8 family.

It localises to the cell inner membrane. It carries out the reaction Release of signal peptides from bacterial membrane prolipoproteins. Hydrolyzes -Xaa-Yaa-Zaa-|-(S,diacylglyceryl)Cys-, in which Xaa is hydrophobic (preferably Leu), and Yaa (Ala or Ser) and Zaa (Gly or Ala) have small, neutral side chains.. Its pathway is protein modification; lipoprotein biosynthesis (signal peptide cleavage). This protein specifically catalyzes the removal of signal peptides from prolipoproteins. In Escherichia coli O6:K15:H31 (strain 536 / UPEC), this protein is Lipoprotein signal peptidase.